The sequence spans 533 residues: Probable bifunctional tRNA threonylcarbamoyladenosine biosynthesis protein (533 aa).

The tract at residues 1-329 (MTRVLGIEGT…FRPDEVPVSW (329 aa)) is kae1. 2 residues coordinate Fe cation: His-113 and His-117. L-threonylcarbamoyladenylate is bound by residues 134-138 (NASGA), Asp-166, Gly-179, Glu-183, and Asn-262. Asp-290 serves as a coordination point for Fe cation. The region spanning 338–533 (PVPTDERRQG…REIETRGRYQ (196 aa)) is the Protein kinase domain. ATP-binding positions include 345–352 (RQGAEAVV) and Lys-363. Residue Asp-452 is the Proton acceptor; for kinase activity of the active site.

This sequence in the N-terminal section; belongs to the KAE1 / TsaD family. In the C-terminal section; belongs to the protein kinase superfamily. Tyr protein kinase family. BUD32 subfamily. As to quaternary structure, component of the KEOPS complex that consists of Kae1, Bud32, Cgi121 and Pcc1; the whole complex dimerizes. The cofactor is Fe(2+).

The protein resides in the cytoplasm. It carries out the reaction L-seryl-[protein] + ATP = O-phospho-L-seryl-[protein] + ADP + H(+). The enzyme catalyses L-threonyl-[protein] + ATP = O-phospho-L-threonyl-[protein] + ADP + H(+). The catalysed reaction is L-threonylcarbamoyladenylate + adenosine(37) in tRNA = N(6)-L-threonylcarbamoyladenosine(37) in tRNA + AMP + H(+). Required for the formation of a threonylcarbamoyl group on adenosine at position 37 (t(6)A37) in tRNAs that read codons beginning with adenine. Is a component of the KEOPS complex that is probably involved in the transfer of the threonylcarbamoyl moiety of threonylcarbamoyl-AMP (TC-AMP) to the N6 group of A37. The Kae1 domain likely plays a direct catalytic role in this reaction. The Bud32 domain probably displays kinase activity that regulates Kae1 function. The sequence is that of Probable bifunctional tRNA threonylcarbamoyladenosine biosynthesis protein from Natronomonas pharaonis (strain ATCC 35678 / DSM 2160 / CIP 103997 / JCM 8858 / NBRC 14720 / NCIMB 2260 / Gabara) (Halobacterium pharaonis).